The chain runs to 906 residues: Cadherin-2 (906 aa).

The N-terminal stretch at 1-25 (MCRIAGAPRTLLPLLAALLQASVEA) is a signal peptide. A propeptide spanning residues 26–159 (SGEIALCKTG…HSGHLQRQKR (134 aa)) is cleaved from the precursor. Phosphoserine occurs at positions 96 and 135. 5 consecutive Cadherin domains span residues 160 to 267 (DWVI…RPEF), 268 to 382 (LHQV…PPEF), 383 to 497 (TAMT…NPYF), 498 to 603 (APNP…DNAP), and 604 to 714 (QVLP…DVDR). The Extracellular portion of the chain corresponds to 160–724 (DWVIPPINLP…IVGAGLGTGA (565 aa)). Glu170 contacts Ca(2+). N-linked (GlcNAc...) asparagine glycosylation is present at Asn190. Residues Asp226, Glu228, Asp259, Met260, Asn261, Asp262, and Asn263 each contribute to the Ca(2+) site. Residue Asn273 is glycosylated (N-linked (GlcNAc...) asparagine). Residues Asp293, Asp295, and Asn301 each coordinate Ca(2+). Asn325 carries N-linked (GlcNAc...) asparagine glycosylation. Asp353 is a binding site for Ca(2+). N-linked (GlcNAc...) asparagine glycosylation is found at Asn402, Asn572, Asn622, Asn651, and Asn692. A helical transmembrane segment spans residues 725–745 (IIAILLCIIILLILVLMFVVW). Residues 746–906 (MKRRDKERQA…LADMYGGGDD (161 aa)) lie on the Cytoplasmic side of the membrane. Residues 863 to 880 (SGSTAGSLSSLNSSSSGG) show a composition bias toward low complexity. A disordered region spans residues 863 to 884 (SGSTAGSLSSLNSSSSGGEQDY).

In terms of assembly, homodimer (via extracellular region). Can also form heterodimers with other cadherins (via extracellular region). Dimerization occurs in trans, i.e. with a cadherin chain from another cell. Interacts with CDCP1. Interacts with PCDH8; this complex may also include TAOK2. The interaction with PCDH8 may lead to internalization through TAOK2/p38 MAPK pathway. Identified in a complex containing FGFR4, NCAM1, CDH2, PLCG1, FRS2, SRC, SHC1, GAP43 and CTTN. May interact with OBSCN (via protein kinase domain 2). Interacts with FBXO45. Cleaved by MMP24. Ectodomain cleavage leads to the generation of a soluble 90 kDa N-terminal soluble fragment and a 45 kDa membrane-bound C-terminal fragment 1 (CTF1), which is further cleaved by gamma-secretase into a 35 kDa. Cleavage in neural stem cells by MMP24 affects CDH2-mediated anchorage of neural stem cells to ependymocytes in the adult subependymal zone, leading to modulate neural stem cell quiescence.

The protein resides in the cell membrane. Its subcellular location is the sarcolemma. The protein localises to the cell junction. It localises to the cell surface. It is found in the desmosome. The protein resides in the adherens junction. Its function is as follows. Calcium-dependent cell adhesion protein; preferentially mediates homotypic cell-cell adhesion by dimerization with a CDH2 chain from another cell. Cadherins may thus contribute to the sorting of heterogeneous cell types. Acts as a regulator of neural stem cells quiescence by mediating anchorage of neural stem cells to ependymocytes in the adult subependymal zone: upon cleavage by MMP24, CDH2-mediated anchorage is affected, leading to modulate neural stem cell quiescence. Plays a role in cell-to-cell junction formation between pancreatic beta cells and neural crest stem (NCS) cells, promoting the formation of processes by NCS cells. Required for proper neurite branching. Required for pre- and postsynaptic organization. CDH2 may be involved in neuronal recognition mechanism. In hippocampal neurons, may regulate dendritic spine density. In Callithrix jacchus (White-tufted-ear marmoset), this protein is Cadherin-2 (CDH2).